Consider the following 283-residue polypeptide: Trafficking protein particle complex subunit 31 (283 aa).

Over residues 1–16 (MSQRIIQPSASDQQFP) the composition is skewed to polar residues. 2 disordered regions span residues 1–20 (MSQR…GKSD) and 126–156 (SSKL…RLQE). Residues 126–151 (SSKLSNASNSPGMLANSSTATSASAN) are compositionally biased toward low complexity.

The protein belongs to the TRAPP small subunits family. BET3 subfamily. Part of the multisubunit TRAPP (transport protein particle) I complex composed of BET3, BET5, TRS20, TRS23, TRS31 and TRS33. Part of the multisubunit TRAPP (transport protein particle) II complex composed of BET3, BET5, TRS20, TRS23, TRS31, TRS33, TRS65, TRS85, TRS120 and TRS130. Part of the multisubunit TRAPP (transport protein particle) III complex composed of BET3, BET5, TRS20, TRS23, TRS31, TRS33 and TRS85.

The protein localises to the golgi apparatus. It is found in the cis-Golgi network. Its subcellular location is the endoplasmic reticulum. It localises to the preautophagosomal structure. In terms of biological role, component of the TRAPP I, TRAPP II and TRAPP III complexes which act as guanine nucleotide exchange factors (GEF) for YPT1. TRAPP I plays a key role in the late stages of endoplasmic reticulum to Golgi traffic. TRAPP II plays a role in intra-Golgi transport. TRAPP III plays a role in autophagosome formation. In Saccharomyces cerevisiae (strain ATCC 204508 / S288c) (Baker's yeast), this protein is Trafficking protein particle complex subunit 31 (TRS31).